An 801-amino-acid polypeptide reads, in one-letter code: Probable methionine--tRNA ligase (801 aa).

Residues 25–35 carry the 'HIGH' region motif; it reads PYVNNVPHLGN. The short motif at 347–351 is the 'KMSKS' region element; it reads KFSKS. Residue Lys-350 participates in ATP binding. The segment at 606–633 is disordered; that stretch reads DKLKGTKLSDGGQKKEQKKQSGGSKSKN. Positions 639 to 742 constitute a tRNA-binding domain; sequence TVAKLDIRVG…ESAAVGERVT (104 aa).

Belongs to the class-I aminoacyl-tRNA synthetase family.

Its subcellular location is the cytoplasm. It carries out the reaction tRNA(Met) + L-methionine + ATP = L-methionyl-tRNA(Met) + AMP + diphosphate. The chain is Probable methionine--tRNA ligase from Oryza sativa subsp. japonica (Rice).